Here is a 163-residue protein sequence, read N- to C-terminus: Nucleotide-binding protein CGSHiGG_08790 (163 aa).

This sequence belongs to the YajQ family.

In terms of biological role, nucleotide-binding protein. The chain is Nucleotide-binding protein CGSHiGG_08790 from Haemophilus influenzae (strain PittGG).